Reading from the N-terminus, the 256-residue chain is Thiazole synthase (256 aa).

Lys96 functions as the Schiff-base intermediate with DXP in the catalytic mechanism. Residues Gly157, 183-184, and 205-206 each bind 1-deoxy-D-xylulose 5-phosphate; these read AG and NT.

Belongs to the ThiG family. In terms of assembly, homotetramer. Forms heterodimers with either ThiH or ThiS.

Its subcellular location is the cytoplasm. It carries out the reaction [ThiS sulfur-carrier protein]-C-terminal-Gly-aminoethanethioate + 2-iminoacetate + 1-deoxy-D-xylulose 5-phosphate = [ThiS sulfur-carrier protein]-C-terminal Gly-Gly + 2-[(2R,5Z)-2-carboxy-4-methylthiazol-5(2H)-ylidene]ethyl phosphate + 2 H2O + H(+). The protein operates within cofactor biosynthesis; thiamine diphosphate biosynthesis. Catalyzes the rearrangement of 1-deoxy-D-xylulose 5-phosphate (DXP) to produce the thiazole phosphate moiety of thiamine. Sulfur is provided by the thiocarboxylate moiety of the carrier protein ThiS. In vitro, sulfur can be provided by H(2)S. This is Thiazole synthase from Bacillus cereus (strain G9842).